We begin with the raw amino-acid sequence, 252 residues long: Triosephosphate isomerase (252 aa).

Residue 10-12 (NWK) coordinates substrate. Residue histidine 96 is the Electrophile of the active site. The active-site Proton acceptor is glutamate 168. Residues glycine 174, serine 214, and 235-236 (GG) contribute to the substrate site.

This sequence belongs to the triosephosphate isomerase family. As to quaternary structure, homodimer.

It localises to the cytoplasm. The enzyme catalyses D-glyceraldehyde 3-phosphate = dihydroxyacetone phosphate. It participates in carbohydrate biosynthesis; gluconeogenesis. The protein operates within carbohydrate degradation; glycolysis; D-glyceraldehyde 3-phosphate from glycerone phosphate: step 1/1. Its function is as follows. Involved in the gluconeogenesis. Catalyzes stereospecifically the conversion of dihydroxyacetone phosphate (DHAP) to D-glyceraldehyde-3-phosphate (G3P). This chain is Triosephosphate isomerase, found in Streptococcus equi subsp. zooepidemicus (strain MGCS10565).